The primary structure comprises 164 residues: NADH-quinone oxidoreductase subunit I (164 aa).

4Fe-4S ferredoxin-type domains are found at residues 54-84 and 95-124; these read LRRY…IEAG and VRYD…EGPN. Residues cysteine 64, cysteine 67, cysteine 70, cysteine 74, cysteine 104, cysteine 107, cysteine 110, and cysteine 114 each contribute to the [4Fe-4S] cluster site.

This sequence belongs to the complex I 23 kDa subunit family. In terms of assembly, NDH-1 is composed of 14 different subunits. Subunits NuoA, H, J, K, L, M, N constitute the membrane sector of the complex. The cofactor is [4Fe-4S] cluster.

Its subcellular location is the cell inner membrane. The catalysed reaction is a quinone + NADH + 5 H(+)(in) = a quinol + NAD(+) + 4 H(+)(out). Its function is as follows. NDH-1 shuttles electrons from NADH, via FMN and iron-sulfur (Fe-S) centers, to quinones in the respiratory chain. The immediate electron acceptor for the enzyme in this species is believed to be ubiquinone. Couples the redox reaction to proton translocation (for every two electrons transferred, four hydrogen ions are translocated across the cytoplasmic membrane), and thus conserves the redox energy in a proton gradient. The chain is NADH-quinone oxidoreductase subunit I from Mesorhizobium japonicum (strain LMG 29417 / CECT 9101 / MAFF 303099) (Mesorhizobium loti (strain MAFF 303099)).